A 99-amino-acid chain; its full sequence is Integration host factor subunit alpha (99 aa).

The interval 49–75 (FGNFDLRDKNQRPGRNPKTGEDIPITA) is disordered.

The protein belongs to the bacterial histone-like protein family. In terms of assembly, heterodimer of an alpha and a beta chain.

In terms of biological role, this protein is one of the two subunits of integration host factor, a specific DNA-binding protein that functions in genetic recombination as well as in transcriptional and translational control. The sequence is that of Integration host factor subunit alpha from Klebsiella pneumoniae (strain 342).